The sequence spans 635 residues: 1-deoxy-D-xylulose-5-phosphate synthase (635 aa).

Thiamine diphosphate is bound by residues H74 and 115–117; that span reads AHS. D146 is a Mg(2+) binding site. Thiamine diphosphate is bound by residues 147–148, N176, Y283, and E365; that span reads GA. Residue N176 participates in Mg(2+) binding.

The protein belongs to the transketolase family. DXPS subfamily. In terms of assembly, homodimer. It depends on Mg(2+) as a cofactor. The cofactor is thiamine diphosphate.

The catalysed reaction is D-glyceraldehyde 3-phosphate + pyruvate + H(+) = 1-deoxy-D-xylulose 5-phosphate + CO2. Its pathway is metabolic intermediate biosynthesis; 1-deoxy-D-xylulose 5-phosphate biosynthesis; 1-deoxy-D-xylulose 5-phosphate from D-glyceraldehyde 3-phosphate and pyruvate: step 1/1. In terms of biological role, catalyzes the acyloin condensation reaction between C atoms 2 and 3 of pyruvate and glyceraldehyde 3-phosphate to yield 1-deoxy-D-xylulose-5-phosphate (DXP). This Paraburkholderia xenovorans (strain LB400) protein is 1-deoxy-D-xylulose-5-phosphate synthase.